A 402-amino-acid chain; its full sequence is mRNA cap guanine-N(7) methyltransferase (402 aa).

The span at 1–11 (MDHVLNPEEKV) shows a compositional bias: basic and acidic residues. The tract at residues 1-75 (MDHVLNPEEK…PRLEEGHGSL (75 aa)) is disordered. The span at 35 to 50 (PKLSASEKSLPGNTKS) shows a compositional bias: polar residues. Basic and acidic residues predominate over residues 55 to 72 (KAAEPDSPPKRPRLEEGH). An mRNA cap 0 methyltransferase domain is found at 94-401 (SRIFHLRNFN…IYLLFAFEKQ (308 aa)). Residue 103–104 (NN) coordinates mRNA. K107, G131, D153, D187, Q210, and Y215 together coordinate S-adenosyl-L-methionine.

The protein belongs to the class I-like SAM-binding methyltransferase superfamily. mRNA cap 0 methyltransferase family.

Its subcellular location is the nucleus. The catalysed reaction is a 5'-end (5'-triphosphoguanosine)-ribonucleoside in mRNA + S-adenosyl-L-methionine = a 5'-end (N(7)-methyl 5'-triphosphoguanosine)-ribonucleoside in mRNA + S-adenosyl-L-homocysteine. In terms of biological role, catalytic subunit of the mRNA-capping methyltransferase RNMT:RAMAC complex that methylates the N7 position of the added guanosine to the 5'-cap structure of mRNAs. Binds RNA containing 5'-terminal GpppC. The sequence is that of mRNA cap guanine-N(7) methyltransferase (rnmt) from Xenopus laevis (African clawed frog).